A 152-amino-acid polypeptide reads, in one-letter code: MAQPESSADFGIAQQNNYYCYWQSLPSAIRVKQEFQPSQSYRYGNWYARQHGSYLLSGYSYGCAVDGNGKDCFSAHETPEHTAGTLVMPKETTPLAENQDEDPLEDPHLHLNIEESNQEFMVKSEELYDSLMNCHWQPLDTVHSEIPDETPK.

This is an uncharacterized protein from Homo sapiens (Human).